The chain runs to 174 residues: U1 small nuclear ribonucleoprotein C (174 aa).

A Matrin-type zinc finger spans residues 4 to 36 (YYCDYCDKYLTHDSPSVRKSHTVGKQHKLAVQL). 2 stretches are compositionally biased toward low complexity: residues 82-109 (QQQQQQQQQQGILPFQGMQPPPHQQQGM) and 122-140 (PHQFNNNNNPHQQHSFQPP). The disordered stretch occupies residues 82–174 (QQQQQQQQQQ…QHNQPTIPGL (93 aa)). Positions 141 to 163 (HHQHHPHQQHQQHQQHQHQHQHQ) are enriched in basic residues. Residues 164 to 174 (QQHNQPTIPGL) show a composition bias toward low complexity.

The protein belongs to the U1 small nuclear ribonucleoprotein C family. In terms of assembly, component of the U1 snRNP. The U1 snRNP is composed of the U1 snRNA and the 7 core Sm proteins SNRPB, SNRPD1, SNRPD2, SNRPD3, SNRPE, SNRPF and SNRPG that assemble in a heptameric protein ring on the Sm site of the small nuclear RNA to form the core snRNP, and at least 3 U1 snRNP-specific proteins SNRNP70/U1-70K, SNRPA/U1-A and SNRPC/U1-C. SNRPC/U1-C interacts with U1 snRNA and the 5' splice-site region of the pre-mRNA.

It is found in the nucleus. Functionally, component of the spliceosomal U1 snRNP, which is essential for recognition of the pre-mRNA 5' splice-site and the subsequent assembly of the spliceosome. SNRPC/U1-C is directly involved in initial 5' splice-site recognition for both constitutive and regulated alternative splicing. The interaction with the 5' splice-site seems to precede base-pairing between the pre-mRNA and the U1 snRNA. Stimulates commitment or early (E) complex formation by stabilizing the base pairing of the 5' end of the U1 snRNA and the 5' splice-site region. The sequence is that of U1 small nuclear ribonucleoprotein C from Dictyostelium discoideum (Social amoeba).